Consider the following 171-residue polypeptide: Peptide methionine sulfoxide reductase MsrA (171 aa).

Residue C13 is part of the active site.

The protein belongs to the MsrA Met sulfoxide reductase family.

The enzyme catalyses L-methionyl-[protein] + [thioredoxin]-disulfide + H2O = L-methionyl-(S)-S-oxide-[protein] + [thioredoxin]-dithiol. The catalysed reaction is [thioredoxin]-disulfide + L-methionine + H2O = L-methionine (S)-S-oxide + [thioredoxin]-dithiol. Has an important function as a repair enzyme for proteins that have been inactivated by oxidation. Catalyzes the reversible oxidation-reduction of methionine sulfoxide in proteins to methionine. The sequence is that of Peptide methionine sulfoxide reductase MsrA from Mycobacterium sp. (strain MCS).